A 470-amino-acid chain; its full sequence is Sulfate adenylyltransferase subunit 1 (470 aa).

One can recognise a tr-type G domain in the interval 22 to 238 (KELLRFITCG…ETIKIDYAYT (217 aa)). The interval 31–38 (GSVDDGKS) is G1. Position 31–38 (31–38 (GSVDDGKS)) interacts with GTP. Residues 89 to 93 (GITID) are G2. The G3 stretch occupies residues 110–113 (DTPG). GTP-binding positions include 110-114 (DTPGH) and 165-168 (NKMD). The G4 stretch occupies residues 165–168 (NKMD). Residues 202–204 (SAL) are G5.

This sequence belongs to the TRAFAC class translation factor GTPase superfamily. Classic translation factor GTPase family. CysN/NodQ subfamily. In terms of assembly, heterodimer composed of CysD, the smaller subunit, and CysN.

It carries out the reaction sulfate + ATP + H(+) = adenosine 5'-phosphosulfate + diphosphate. Its pathway is sulfur metabolism; hydrogen sulfide biosynthesis; sulfite from sulfate: step 1/3. Its function is as follows. With CysD forms the ATP sulfurylase (ATPS) that catalyzes the adenylation of sulfate producing adenosine 5'-phosphosulfate (APS) and diphosphate, the first enzymatic step in sulfur assimilation pathway. APS synthesis involves the formation of a high-energy phosphoric-sulfuric acid anhydride bond driven by GTP hydrolysis by CysN coupled to ATP hydrolysis by CysD. The sequence is that of Sulfate adenylyltransferase subunit 1 from Francisella tularensis subsp. tularensis (strain SCHU S4 / Schu 4).